Reading from the N-terminus, the 193-residue chain is Adenine phosphoribosyltransferase (193 aa).

Belongs to the purine/pyrimidine phosphoribosyltransferase family. Homodimer.

Its subcellular location is the cytoplasm. It carries out the reaction AMP + diphosphate = 5-phospho-alpha-D-ribose 1-diphosphate + adenine. The protein operates within purine metabolism; AMP biosynthesis via salvage pathway; AMP from adenine: step 1/1. Its function is as follows. Catalyzes a salvage reaction resulting in the formation of AMP, that is energically less costly than de novo synthesis. In Bifidobacterium longum subsp. infantis (strain ATCC 15697 / DSM 20088 / JCM 1222 / NCTC 11817 / S12), this protein is Adenine phosphoribosyltransferase.